The primary structure comprises 233 residues: Small ribosomal subunit protein uS3 (233 aa).

One can recognise a KH type-2 domain in the interval 39-107 (VRQFLMKTLE…PVQINISEVR (69 aa)).

It belongs to the universal ribosomal protein uS3 family. As to quaternary structure, part of the 30S ribosomal subunit. Forms a tight complex with proteins S10 and S14.

Functionally, binds the lower part of the 30S subunit head. Binds mRNA in the 70S ribosome, positioning it for translation. The chain is Small ribosomal subunit protein uS3 from Buchnera aphidicola subsp. Acyrthosiphon pisum (strain APS) (Acyrthosiphon pisum symbiotic bacterium).